Here is a 1797-residue protein sequence, read N- to C-terminus: Non-reducing polyketide synthase nscA (1797 aa).

The N-terminal acylcarrier protein transacylase domain (SAT) stretch occupies residues 17–256 (SDDLKDLFRR…PLPVYDGLCH (240 aa)). A Ketosynthase family 3 (KS3) domain is found at 392–825 (SSKLAIVGMA…GGNTTLLLED (434 aa)). Active-site for beta-ketoacyl synthase activity residues include Cys565, His700, and His743. A malonyl-CoA:ACP transacylase (MAT) domain region spans residues 931–1251 (FTGQGAYYSG…SLVTLHLAGL (321 aa)). The interval 1318-1637 (TSLIHQITAE…RLLMDRFFSP (320 aa)) is product template (PT) domain. Positions 1322–1458 (HQITAETIES…ATVRFEDPAA (137 aa)) are N-terminal hotdog fold. A PKS/mFAS DH domain is found at 1322–1632 (HQITAETIES…FRRVPRLLMD (311 aa)). The active-site Proton acceptor; for dehydratase activity is the His1354. The segment at 1482–1632 (VEGKASRLSK…FRRVPRLLMD (151 aa)) is C-terminal hotdog fold. Catalysis depends on Asp1543, which acts as the Proton donor; for dehydratase activity. Residues 1663–1686 (SVPEISAPSPSIVVSDSTANNTLT) are compositionally biased toward polar residues. The tract at residues 1663 to 1723 (SVPEISAPSP…PESESAEPLG (61 aa)) is disordered. Over residues 1698–1709 (SSSESSTPKESP) the composition is skewed to low complexity. Positions 1720 to 1797 (EPLGNTVSQC…EMTAWIEEYC (78 aa)) constitute a Carrier domain. O-(pantetheine 4'-phosphoryl)serine is present on Ser1757.

Pantetheine 4'-phosphate is required as a cofactor.

It participates in secondary metabolite biosynthesis. Non-reducing polyketide synthase; part of the gene cluster that mediates the biosynthesis of neosartoricin B, a prenylated anthracenone that probably exhibits T-cell antiproliferative activity, suggestive of a physiological role as an immunosuppressive agent. The non-reducing polyketide synthase nscA probably synthesizes and cyclizes the decaketide backbone. The hydrolase nscB then mediates the product release through hydrolysis followed by spontaneous decarboxylation. The prenyltransferase nscD catalyzes the addition of the dimethylallyl group to the aromatic C5. The FAD-dependent monooxygenase nscC is then responsible for the stereospecific hydroxylation at C2. Neosartoricin B can be converted into two additional compounds neosartoricins C and D. Neosartoricin C is a spirocyclic compound that is cyclized through the attack of C3 hydroxyl on C14, followed by dehydration. On the other hand, neosartoricin D is a further cyclized compound in which attack of C2 on C14 in neosartoricin C results in the formation of the acetal-containing dioxabicyclo-octanone ring. Both of these compounds are novel and possibly represent related metabolites of the gene cluster. This chain is Non-reducing polyketide synthase nscA, found in Arthroderma gypseum (strain ATCC MYA-4604 / CBS 118893) (Microsporum gypseum).